We begin with the raw amino-acid sequence, 2839 residues long: Neurofibromin (2839 aa).

N-acetylalanine is present on alanine 2. Phosphoserine occurs at positions 864 and 876. Residues 1251–1482 (HLLYQLLWNM…DAARRFFLDI (232 aa)) form the Ras-GAP domain. Residues 1580-1738 (EKEEFKALKT…ATLALEEDLK (159 aa)) form the CRAL-TRIO domain. A lipid binding region spans residues 1580 to 1837 (EKEEFKALKT…RTRWELSQPD (258 aa)). A phosphoserine mark is found at serine 2188 and serine 2467. Threonine 2514 is subject to Phosphothreonine. A phosphoserine mark is found at serine 2515, serine 2521, serine 2523, and serine 2543. The Bipartite nuclear localization signal signature appears at 2555–2571 (KRQEMESGITTPPKMRR). Threonine 2565 is modified (phosphothreonine). A phosphoserine mark is found at serine 2597, serine 2802, and serine 2817. Positions 2787–2839 (TSQHSPGIDKENVELSPTTGHCNSGRTRHGSASQVQKQRSAGSFKRNSIKKIV) are disordered. Residues 2801–2827 (LSPTTGHCNSGRTRHGSASQVQKQRSA) show a composition bias toward polar residues.

In terms of assembly, interacts with HTR6. Interacts with SPRED2. Ubiquitinated by RNF7/RBX2, leading to its degradation. As to expression, detected in brain, peripheral nerve, lung, colon and muscle.

The protein localises to the nucleus. Its subcellular location is the nucleolus. It localises to the cell membrane. Stimulates the GTPase activity of Ras. NF1 shows greater affinity for Ras GAP, but lower specific activity. May be a regulator of Ras activity. The protein is Neurofibromin (NF1) of Homo sapiens (Human).